Reading from the N-terminus, the 202-residue chain is Transcription factor MUTE (202 aa).

In terms of domain architecture, bHLH spans methionine 1 to leucine 49.

As to quaternary structure, homodimer. Leaf epidermis and flowers.

Its subcellular location is the nucleus. Functionally, transcription factor. Together with FMA and SPCH, regulates the stomata formation. Required for the differentiation of stomatal guard cells, by promoting successive asymmetric cell divisions and the formation of guard mother cells. Promotes the conversion of the leaf epidermis into stomata. This Arabidopsis thaliana (Mouse-ear cress) protein is Transcription factor MUTE (MUTE).